The sequence spans 111 residues: Iron-sulfur cluster assembly protein CyaY (111 aa).

It belongs to the frataxin family.

Its function is as follows. Involved in iron-sulfur (Fe-S) cluster assembly. May act as a regulator of Fe-S biogenesis. The polypeptide is Iron-sulfur cluster assembly protein CyaY (Cupriavidus pinatubonensis (strain JMP 134 / LMG 1197) (Cupriavidus necator (strain JMP 134))).